The sequence spans 191 residues: Threonylcarbamoyl-AMP synthase (191 aa).

The YrdC-like domain occupies 10–191; it reads PFRVRHAAAE…DGRSGAYLRR (182 aa).

The protein belongs to the SUA5 family. TsaC subfamily.

The protein resides in the cytoplasm. It catalyses the reaction L-threonine + hydrogencarbonate + ATP = L-threonylcarbamoyladenylate + diphosphate + H2O. In terms of biological role, required for the formation of a threonylcarbamoyl group on adenosine at position 37 (t(6)A37) in tRNAs that read codons beginning with adenine. Catalyzes the conversion of L-threonine, HCO(3)(-)/CO(2) and ATP to give threonylcarbamoyl-AMP (TC-AMP) as the acyladenylate intermediate, with the release of diphosphate. This chain is Threonylcarbamoyl-AMP synthase, found in Halorhodospira halophila (strain DSM 244 / SL1) (Ectothiorhodospira halophila (strain DSM 244 / SL1)).